A 148-amino-acid polypeptide reads, in one-letter code: Deoxyuridine 5'-triphosphate nucleotidohydrolase (148 aa).

Substrate is bound by residues Arg67–Gly69, Asn80, Leu84–Asp86, and Met94.

The protein belongs to the dUTPase family. Mg(2+) serves as cofactor.

The catalysed reaction is dUTP + H2O = dUMP + diphosphate + H(+). It participates in pyrimidine metabolism; dUMP biosynthesis; dUMP from dCTP (dUTP route): step 2/2. Functionally, this enzyme is involved in nucleotide metabolism: it produces dUMP, the immediate precursor of thymidine nucleotides and it decreases the intracellular concentration of dUTP so that uracil cannot be incorporated into DNA. The polypeptide is Deoxyuridine 5'-triphosphate nucleotidohydrolase (Burkholderia ambifaria (strain MC40-6)).